The primary structure comprises 706 residues: Elongation factor G (706 aa).

Positions 8–290 (KRYRNIGIVA…GVIEYMPSPT (283 aa)) constitute a tr-type G domain. GTP is bound by residues 17 to 24 (AHVDAGKT), 88 to 92 (DTPGH), and 142 to 145 (NKMD).

This sequence belongs to the TRAFAC class translation factor GTPase superfamily. Classic translation factor GTPase family. EF-G/EF-2 subfamily.

The protein resides in the cytoplasm. In terms of biological role, catalyzes the GTP-dependent ribosomal translocation step during translation elongation. During this step, the ribosome changes from the pre-translocational (PRE) to the post-translocational (POST) state as the newly formed A-site-bound peptidyl-tRNA and P-site-bound deacylated tRNA move to the P and E sites, respectively. Catalyzes the coordinated movement of the two tRNA molecules, the mRNA and conformational changes in the ribosome. This chain is Elongation factor G, found in Chromohalobacter salexigens (strain ATCC BAA-138 / DSM 3043 / CIP 106854 / NCIMB 13768 / 1H11).